The sequence spans 131 residues: MNLSTGIIFCFLILGVSSQRWGTFLKEAGQGAKDMWRAYQDMKEANYRGADKYFHARGNYDAARRGPGGAWAAKVISNARETIQGITDPLFKGMTRDQVREDSKADQFANEWGRSGKDPNHFRPAGLPDKY.

The signal sequence occupies residues 1–18 (MNLSTGIIFCFLILGVSS). Residues 94–105 (MTRDQVREDSKA) are compositionally biased toward basic and acidic residues. A disordered region spans residues 94–131 (MTRDQVREDSKADQFANEWGRSGKDPNHFRPAGLPDKY).

This sequence belongs to the SAA family. In terms of tissue distribution, expressed in the liver. Expressed in mammary epithelial cells. Expressed at high levels in mammary ductal cells and vesicle engorged alveoli, but absent from stromal and connective tissue and leukocytes. Secreted into colostrum and mastitic milk (at protein level). Low expression levels, if any, in normal milk (at protein level).

It localises to the secreted. Functionally, major acute phase reactant. Apolipoprotein of the HDL complex. May have a role in protection of the mammary gland during remodeling and infection. In vitro exhibits antimicrobial activity against Escherichia coli, Streptococcus uberis and Pseudomonas aeruginosa. This is Serum amyloid A-3 protein (SAA3) from Bos taurus (Bovine).